Consider the following 305-residue polypeptide: Fumarylacetoacetate hydrolase domain-containing protein 2 homolog (305 aa).

The a divalent metal cation site is built by glutamate 141, glutamate 143, and aspartate 172.

It belongs to the FAH family. Ca(2+) is required as a cofactor. Mg(2+) serves as cofactor.

Its function is as follows. May have hydrolase activity. The polypeptide is Fumarylacetoacetate hydrolase domain-containing protein 2 homolog (fahd2) (Dictyostelium discoideum (Social amoeba)).